A 328-amino-acid chain; its full sequence is Tetraacyldisaccharide 4'-kinase (328 aa).

ATP is bound at residue 58–65 (TMGGAGKT).

The protein belongs to the LpxK family.

The catalysed reaction is a lipid A disaccharide + ATP = a lipid IVA + ADP + H(+). It participates in glycolipid biosynthesis; lipid IV(A) biosynthesis; lipid IV(A) from (3R)-3-hydroxytetradecanoyl-[acyl-carrier-protein] and UDP-N-acetyl-alpha-D-glucosamine: step 6/6. Functionally, transfers the gamma-phosphate of ATP to the 4'-position of a tetraacyldisaccharide 1-phosphate intermediate (termed DS-1-P) to form tetraacyldisaccharide 1,4'-bis-phosphate (lipid IVA). In Phenylobacterium zucineum (strain HLK1), this protein is Tetraacyldisaccharide 4'-kinase.